The chain runs to 268 residues: MTAPREPFFPVDRSIRASDEPLEIRRLGRMGYQEAWDLQAEIAAARAAGTQGDVILVVEHPNVYTAGKRTQPEDMPDNGLPVIDVDRGGRITWHGEGQLVVYPIIKLAEPVDVVDYVRRLEEAIIQAVRELGVSTAGRIDGRSGVWVPSTTQAADPAAPKRDRKLGALGIRVTRGVTMHGLALNCTNTLEYYEHIVACGIDDADVSTLSLELGREVTMEEAEAPLLDALLKALSGELTVADHTFASAPDPIKVANEKARQARKAAQEK.

One can recognise a BPL/LPL catalytic domain in the interval 49–237 (GTQGDVILVV…ALLKALSGEL (189 aa)). Residues 87-94 (RGGRITWH), 167-169 (ALG), and 180-182 (GLA) each bind substrate. Catalysis depends on C198, which acts as the Acyl-thioester intermediate.

It belongs to the LipB family.

The protein localises to the cytoplasm. The enzyme catalyses octanoyl-[ACP] + L-lysyl-[protein] = N(6)-octanoyl-L-lysyl-[protein] + holo-[ACP] + H(+). Its pathway is protein modification; protein lipoylation via endogenous pathway; protein N(6)-(lipoyl)lysine from octanoyl-[acyl-carrier-protein]: step 1/2. Its function is as follows. Catalyzes the transfer of endogenously produced octanoic acid from octanoyl-acyl-carrier-protein onto the lipoyl domains of lipoate-dependent enzymes. Lipoyl-ACP can also act as a substrate although octanoyl-ACP is likely to be the physiological substrate. This is Octanoyltransferase from Corynebacterium aurimucosum (strain ATCC 700975 / DSM 44827 / CIP 107346 / CN-1) (Corynebacterium nigricans).